A 401-amino-acid chain; its full sequence is Type 3 secretion system translocon protein SctE (401 aa).

Residues 129-160 adopt a coiled-coil conformation; it reads IQRLHEQNMKKIEENQEKIKETEENAKQVKKS. Helical transmembrane passes span 166–186 and 225–245; these read IFGW…VASG and LGPI…VMTF. The stretch at 345–379 forms a coiled coil; that stretch reads LALNKADMAALQSIIDRLKEELSHLSESHRQVMEL.

The protein belongs to the SctE/SipB/YopB family. As to quaternary structure, the core secretion machinery of the T3SS is composed of approximately 20 different proteins, including cytoplasmic components, a base, an export apparatus and a needle. This subunit is involved in the formation of a pore, called the translocon, in host membrane. Interacts with YopD/SctB. Together with YopD/SctB, forms a multimeric integral membrane complex with a mass of between 500 and 700 kDa.

The protein localises to the secreted. It localises to the host membrane. Functionally, component of the type III secretion system (T3SS), also called injectisome, which is used to inject bacterial effector proteins into eukaryotic host cells. YopB/SctE and YopD/SctB are inserted into the host membrane where they form a pore and allow the translocation of effector proteins into the cytosol of target cells. Is an essential virulence determinant. Required for YopE translocation. In terms of biological role, essential for the establishment of Yersinia infections in a mouse model system, but not for the targeting of effector Yops. May modulate the host's immune response at a distance from the site of infection. The protein is Type 3 secretion system translocon protein SctE of Yersinia enterocolitica.